The following is a 508-amino-acid chain: Fibroblast growth factor receptor substrate 2 (508 aa).

G2 carries the N-myristoyl glycine lipid modification. The region spanning 13-115 (VPDNHRNKFK…QNNSINVVEE (103 aa)) is the IRS-type PTB domain. Residues 116–180 (PVVERSSHQT…GSARLPSVGE (65 aa)) are disordered. A compositionally biased stretch (basic and acidic residues) spans 117-131 (VVERSSHQTELEVPR). S177 is subject to Phosphoserine. At Y196 the chain carries Phosphotyrosine; by FGFR1. Disordered regions lie at residues 201–243 (GVQE…PQVL) and 268–298 (LEQL…RRDV). Residues S211 and S221 each carry the phosphoserine modification. Residues 227–240 (TPKEEPSNPEDRDP) are compositionally biased toward basic and acidic residues. Y306 is modified (phosphotyrosine; by FGFR1). The interval 315–345 (PSASGVRRGRLTSTSTSDTQNINNSAQRRPA) is disordered. The span at 325–341 (LTSTSTSDTQNINNSAQ) shows a compositional bias: polar residues. A Phosphotyrosine; by FGFR1 modification is found at Y349. S365 carries the post-translational modification Phosphoserine. 2 positions are modified to phosphotyrosine; by FGFR1: Y392 and Y436. The tract at residues 441 to 467 (LEGGSDSDNPQTPKTPTTPLPQTPTRR) is disordered. Residue Y471 is modified to Phosphotyrosine; by FGFR1. Residues 483–508 (SNLQKALPRDDGTSRKTRHNSTDLPM) form a disordered region.

As to quaternary structure, part of a complex containing FRS2, GRB2, GAB1, PIK3R1 and SOS1. Part of a complex containing GRB2 and CBL. Binds ALK, CKS2, FGFR1, RET, MAPK1/ERK2, MAPK3/ERK1 and SRC. The tyrosine-phosphorylated protein binds the SH2 domains of GRB2 and PTPN11. Interacts with NTRK1, NTRK2 and NTRK3 (phosphorylated upon ligand-binding). Identified in a complex containing FGFR4, NCAM1, CDH2, PLCG1, FRS2, SRC, SHC1, GAP43 and CTTN. In terms of processing, phosphorylated on tyrosine residues upon stimulation by FGF2 or NGFB. Phosphorylated by ULK2 (in vitro). Phosphorylated on tyrosine residues by activated ALK and FGFR1. Phosphorylated on tyrosine residues upon activation of FGFR2 and FGFR3. Phosphorylated on threonine residues by MAP kinases; this inhibits tyrosine phosphorylation, and thereby down-regulates FRS2-mediated activation of MAP kinases. Ubiquitinated when tyrosine phosphorylated and in a complex with GRB2. The unphosphorylated form is not subject to ubiquitination. Ubiquitous. Expression is highest in brain, kidney, lung and testis.

It is found in the membrane. Functionally, adapter protein that links activated FGR and NGF receptors to downstream signaling pathways. Plays an important role in the activation of MAP kinases and in the phosphorylation of PIK3R1, the regulatory subunit of phosphatidylinositol 3-kinase, in response to ligand-mediated activation of FGFR1. Modulates signaling via SHC1 by competing for a common binding site on NTRK1. In Mus musculus (Mouse), this protein is Fibroblast growth factor receptor substrate 2 (Frs2).